The following is a 208-amino-acid chain: Protein GrpE (208 aa).

Residues methionine 1 to alanine 25 show a composition bias toward basic and acidic residues. Residues methionine 1–serine 38 are disordered. Acidic residues predominate over residues asparagine 29–serine 38.

It belongs to the GrpE family. Homodimer.

It is found in the cytoplasm. Its function is as follows. Participates actively in the response to hyperosmotic and heat shock by preventing the aggregation of stress-denatured proteins, in association with DnaK and GrpE. It is the nucleotide exchange factor for DnaK and may function as a thermosensor. Unfolded proteins bind initially to DnaJ; upon interaction with the DnaJ-bound protein, DnaK hydrolyzes its bound ATP, resulting in the formation of a stable complex. GrpE releases ADP from DnaK; ATP binding to DnaK triggers the release of the substrate protein, thus completing the reaction cycle. Several rounds of ATP-dependent interactions between DnaJ, DnaK and GrpE are required for fully efficient folding. This chain is Protein GrpE, found in Clostridium perfringens (strain ATCC 13124 / DSM 756 / JCM 1290 / NCIMB 6125 / NCTC 8237 / Type A).